The following is a 1237-amino-acid chain: Rho guanine nucleotide exchange factor 10-like protein (1237 aa).

Disordered regions lie at residues 1 to 117 and 132 to 203; these read MASS…SSRR and YDDV…QPKM. Acidic residues predominate over residues 25 to 45; that stretch reads EAEDDPGEGFEFDDSDDDEDT. At S39 the chain carries Phosphoserine. Residues Y132 and Y153 each carry the phosphotyrosine modification. Composition is skewed to basic and acidic residues over residues 146-163 and 184-194; these read EAERNQPYEDARQDRAPQ and EEAKPEAEPTK. Residue S241 is modified to Phosphoserine. The region spanning 276 to 463 is the DH domain; it reads VRRHILGSIV…ETLAEKLNEQ (188 aa). Disordered regions lie at residues 1091–1118 and 1142–1164; these read QEEAEGQQAEEDKPDGPAPEPAPVPASH and PGPLLSVREPEPADGSALEHSEE.

In terms of assembly, interacts with RHOA, RHOB and RHOC.

It is found in the cytoplasm. Its function is as follows. Acts as a guanine nucleotide exchange factor (GEF) for RHOA, RHOB and RHOC. In Bos taurus (Bovine), this protein is Rho guanine nucleotide exchange factor 10-like protein (ARHGEF10L).